The following is an 885-amino-acid chain: Exosome complex component 10 (885 aa).

Residues 1–10 (MAPPSPREHQ) are compositionally biased toward basic and acidic residues. Disordered regions lie at residues 1–23 (MAPP…PDAE) and 210–232 (KPLP…EDLD). Residue Lys19 forms a Glycyl lysine isopeptide (Lys-Gly) (interchain with G-Cter in SUMO2) linkage. The span at 217–230 (SKERRERPQDRPED) shows a compositional bias: basic and acidic residues. Residues 289 to 455 (HVVSSLDELV…YIYDRMRLEL (167 aa)) enclose the 3'-5' exonuclease domain. 4 residues coordinate Mg(2+): Asp313, Glu315, Asp371, and Asp440. The HRDC domain maps to 503–583 (NSQQLTAFQL…QQAREMPLLK (81 aa)). Lys583 participates in a covalent cross-link: Glycyl lysine isopeptide (Lys-Gly) (interchain with G-Cter in SUMO1); alternate. Lys583 participates in a covalent cross-link: Glycyl lysine isopeptide (Lys-Gly) (interchain with G-Cter in SUMO2); alternate. Lys710 is covalently cross-linked (Glycyl lysine isopeptide (Lys-Gly) (interchain with G-Cter in SUMO2)). The segment at 730-885 (VQKEPKEAAK…RGFRHNWPKR (156 aa)) is disordered. Composition is skewed to basic and acidic residues over residues 732–756 (KEPK…KEES) and 776–794 (ATKK…EQKQ). Phosphoserine is present on Ser821. Glycyl lysine isopeptide (Lys-Gly) (interchain with G-Cter in SUMO2) cross-links involve residues Lys833, Lys859, and Lys873.

It belongs to the exosome component 10/RRP6 family. Component of the RNA exosome complex. The catalytically inactive RNA exosome core complex (Exo-9) associates with the catalytic subunit EXOSC10/RRP6 (via its N-terminus). Exo-9 may associate with DIS3 to form the nucleolar exosome complex, or DIS3L to form the cytoplasmic exosome complex. The RNA exosome complex interacts with cofactors C1D/RRP47, MPHOSPH6/MPP6 and MTREX/MTR4. Interacts with MTREX; the interaction with MTREX mediates the association of MTREX with nuclear RNA exosomes. Part of the small subunit (SSU) processome, composed of more than 70 proteins and the RNA chaperone small nucleolar RNA (snoRNA) U3. Interacts with ALYREF/THOC4. Interacts with DHX36; this interaction occurs in a RNase-insensitive manner. Interacts with NRDE2. Interacts (via C-terminus) with USP36 (via C-terminus); the interaction is facilitated by the association with RNA and promotes sumoylation of EXOSC10. Requires Mg(2+) as cofactor. Post-translationally, sumoylated by USP36; sumoylation does not significantly affect EXOSC10 nucleolar localization and association with core exosome and USP36, but regulates the nucleolar RNA exosome activity in rRNA processing by promoting binding of EXOSC10 to pre-rRNAs. Effects of sumoylation on EXOSC10 levels vary between different studies. Sumoylation of EXOSC10 is required for the modulation of EXOSC10 effects on cellular protein translation and cell proliferation. Sumoylation is promoted by mild hypothermia. In terms of tissue distribution, expressed in testis (at protein level).

The protein resides in the cytoplasm. It is found in the nucleus. Its subcellular location is the nucleolus. The protein localises to the nucleoplasm. Its function is as follows. Catalytic component of the RNA exosome complex which has 3'-&gt;5' exoribonuclease activity and participates in a multitude of cellular RNA processing and degradation events. In the nucleus, the RNA exosome complex is involved in proper maturation of stable RNA species such as rRNA, snRNA and snoRNA, in the elimination of RNA processing by-products and non-coding 'pervasive' transcripts, such as antisense RNA species and promoter-upstream transcripts (PROMPTs), and of mRNAs with processing defects, thereby limiting or excluding their export to the cytoplasm. Part of the small subunit (SSU) processome, first precursor of the small eukaryotic ribosomal subunit. During the assembly of the SSU processome in the nucleolus, many ribosome biogenesis factors, an RNA chaperone and ribosomal proteins associate with the nascent pre-rRNA and work in concert to generate RNA folding, modifications, rearrangements and cleavage as well as targeted degradation of pre-ribosomal RNA by the RNA exosome. The RNA exosome may be involved in Ig class switch recombination (CSR) and/or Ig variable region somatic hypermutation (SHM) by targeting AICDA deamination activity to transcribed dsDNA substrates. In the cytoplasm, the RNA exosome complex is involved in general mRNA turnover and specifically degrades inherently unstable mRNAs containing AU-rich elements (AREs) within their 3' untranslated regions, and in RNA surveillance pathways, preventing translation of aberrant mRNAs. It seems to be involved in degradation of histone mRNA. EXOSC10 is required for nucleolar localization of C1D and probably mediates the association of MTREX, C1D and MPHOSPH6 with the RNA exosome involved in the maturation of 5.8S rRNA. Plays a role in the recruitment of replication protein A complex (RPA) and RAD51 to DNA double-strand breaks caused by irradiation, contributing to DNA repair by homologous recombination. Regulates levels of damage-induced RNAs in order to prevent DNA-RNA hybrid formation at DNA double-strand breaks and limit DNA end resection after damage. Plays a role in oocyte development, maturation and survival. Required for normal testis development and mitotic division of spermatogonia. Plays a role in proper embryo development. Required for global protein translation. Required for cell proliferation. The polypeptide is Exosome complex component 10 (Rattus norvegicus (Rat)).